The following is a 738-amino-acid chain: Coiled-coil domain-containing protein 142 (738 aa).

The interval methionine 1–glycine 34 is disordered. Residues alanine 69–aspartate 92 adopt a coiled-coil conformation. A disordered region spans residues leucine 682–alanine 704. Over residues leucine 685 to proline 698 the composition is skewed to gly residues.

The sequence is that of Coiled-coil domain-containing protein 142 (Ccdc142) from Mus musculus (Mouse).